A 283-amino-acid chain; its full sequence is Homeobox protein Hox-A9a (283 aa).

Disordered regions lie at residues 25–54 (VPRY…GTCS) and 162–181 (EKDA…EKPG). The segment at residues 216 to 275 (TRKKRCPYTKHQILELEKEFLFNTYLTRDRRYEVARLLNLTERQVKIWFQNRRMKMKKFN) is a DNA-binding region (homeobox).

It belongs to the Abd-B homeobox family.

The protein localises to the nucleus. Sequence-specific transcription factor which is part of a developmental regulatory system that provides cells with specific positional identities on the anterior-posterior axis. This is Homeobox protein Hox-A9a (hoxa9a) from Takifugu rubripes (Japanese pufferfish).